Here is a 134-residue protein sequence, read N- to C-terminus: Histone-like protein Rv3852 (134 aa).

Residues 1–10 (MPDPQDRPDS) are compositionally biased toward basic and acidic residues. Residues 1–68 (MPDPQDRPDS…PAEAPVSLQQ (68 aa)) are disordered. Residues 23-48 (LPAKKAAKKAPARKTPAKKAPAKKTP) show a composition bias toward basic residues. A helical transmembrane segment spans residues 111-128 (PVPLIVAVTLSLLALLLI).

In terms of assembly, homodimer in solution. Is probably able to self-associate in higher oligomers along the DNA molecules. Interacts with the N-terminal region of Wag31.

The protein localises to the cell inner membrane. Can interact directly in vitro with the compound agrimophol, a phloroglucinol from the A.pilosa plant, whose extracts have been used in traditional Chinese medicine to treat pulmonary infections. Interaction with agrimophol leads to disruption of Rv3852's DNA binding function. In terms of biological role, binds DNA in vitro. It has been proposed that Rv3852 plays a role in nucleoid organization and may function as an anchorage to tether the DNA to the membrane. However, it was later shown that it has no influence on nucleoid shape or compaction. It plays no role in virulence and only a minor role in the control of transcription, and does not appear to function as a typical nucleoid-associated protein. Its function is as follows. Interacts with Wag31, an important cell shape and cell wall integrity determinant, and facilitates the localization of Wag31 to the cell poles and the cell wall, thus enabling nascent peptidoglycan synthesis. The protein is Histone-like protein Rv3852 of Mycobacterium tuberculosis (strain ATCC 25618 / H37Rv).